Here is a 293-residue protein sequence, read N- to C-terminus: Lipoyl synthase (293 aa).

[4Fe-4S] cluster-binding residues include Cys38, Cys43, Cys49, Cys64, Cys68, Cys71, and Ser277. Positions 50 to 266 (WSRGTATFLL…STIAKNAGIR (217 aa)) constitute a Radical SAM core domain.

It belongs to the radical SAM superfamily. Lipoyl synthase family. Requires [4Fe-4S] cluster as cofactor.

The protein localises to the cytoplasm. It carries out the reaction [[Fe-S] cluster scaffold protein carrying a second [4Fe-4S](2+) cluster] + N(6)-octanoyl-L-lysyl-[protein] + 2 oxidized [2Fe-2S]-[ferredoxin] + 2 S-adenosyl-L-methionine + 4 H(+) = [[Fe-S] cluster scaffold protein] + N(6)-[(R)-dihydrolipoyl]-L-lysyl-[protein] + 4 Fe(3+) + 2 hydrogen sulfide + 2 5'-deoxyadenosine + 2 L-methionine + 2 reduced [2Fe-2S]-[ferredoxin]. It functions in the pathway protein modification; protein lipoylation via endogenous pathway; protein N(6)-(lipoyl)lysine from octanoyl-[acyl-carrier-protein]: step 2/2. In terms of biological role, catalyzes the radical-mediated insertion of two sulfur atoms into the C-6 and C-8 positions of the octanoyl moiety bound to the lipoyl domains of lipoate-dependent enzymes, thereby converting the octanoylated domains into lipoylated derivatives. The sequence is that of Lipoyl synthase from Chlorobium chlorochromatii (strain CaD3).